Reading from the N-terminus, the 248-residue chain is tRNA (guanine-N(1)-)-methyltransferase (248 aa).

S-adenosyl-L-methionine contacts are provided by residues glycine 113 and 133 to 138 (IGDYVL). The interval 226–248 (ARPAQTIRAKGESQKTPKNKTDG) is disordered. Residues 234 to 248 (AKGESQKTPKNKTDG) show a composition bias toward basic and acidic residues.

The protein belongs to the RNA methyltransferase TrmD family. Homodimer.

It localises to the cytoplasm. It catalyses the reaction guanosine(37) in tRNA + S-adenosyl-L-methionine = N(1)-methylguanosine(37) in tRNA + S-adenosyl-L-homocysteine + H(+). Specifically methylates guanosine-37 in various tRNAs. This Rhodopseudomonas palustris (strain ATCC BAA-98 / CGA009) protein is tRNA (guanine-N(1)-)-methyltransferase.